A 141-amino-acid polypeptide reads, in one-letter code: Large ribosomal subunit protein uL11 (141 aa).

Belongs to the universal ribosomal protein uL11 family. As to quaternary structure, part of the ribosomal stalk of the 50S ribosomal subunit. Interacts with L10 and the large rRNA to form the base of the stalk. L10 forms an elongated spine to which L12 dimers bind in a sequential fashion forming a multimeric L10(L12)X complex. One or more lysine residues are methylated.

In terms of biological role, forms part of the ribosomal stalk which helps the ribosome interact with GTP-bound translation factors. The polypeptide is Large ribosomal subunit protein uL11 (Roseobacter denitrificans (strain ATCC 33942 / OCh 114) (Erythrobacter sp. (strain OCh 114))).